A 491-amino-acid polypeptide reads, in one-letter code: Probable cytosol aminopeptidase (491 aa).

The Mn(2+) site is built by Lys-261 and Asp-266. The active site involves Lys-273. Mn(2+) contacts are provided by Asp-285, Asp-344, and Glu-346. Arg-348 is a catalytic residue.

This sequence belongs to the peptidase M17 family. Mn(2+) is required as a cofactor.

It is found in the cytoplasm. It carries out the reaction Release of an N-terminal amino acid, Xaa-|-Yaa-, in which Xaa is preferably Leu, but may be other amino acids including Pro although not Arg or Lys, and Yaa may be Pro. Amino acid amides and methyl esters are also readily hydrolyzed, but rates on arylamides are exceedingly low.. It catalyses the reaction Release of an N-terminal amino acid, preferentially leucine, but not glutamic or aspartic acids.. Its function is as follows. Presumably involved in the processing and regular turnover of intracellular proteins. Catalyzes the removal of unsubstituted N-terminal amino acids from various peptides. The sequence is that of Probable cytosol aminopeptidase from Picosynechococcus sp. (strain ATCC 27264 / PCC 7002 / PR-6) (Agmenellum quadruplicatum).